The following is a 388-amino-acid chain: Chorismate synthase (388 aa).

NADP(+)-binding residues include Arg39 and Arg45. Residues 130–132 (RSS), 251–252 (NA), Gly296, 311–315 (KPIPT), and Arg337 each bind FMN.

It belongs to the chorismate synthase family. As to quaternary structure, homotetramer. Requires FMNH2 as cofactor.

The catalysed reaction is 5-O-(1-carboxyvinyl)-3-phosphoshikimate = chorismate + phosphate. Its pathway is metabolic intermediate biosynthesis; chorismate biosynthesis; chorismate from D-erythrose 4-phosphate and phosphoenolpyruvate: step 7/7. Catalyzes the anti-1,4-elimination of the C-3 phosphate and the C-6 proR hydrogen from 5-enolpyruvylshikimate-3-phosphate (EPSP) to yield chorismate, which is the branch point compound that serves as the starting substrate for the three terminal pathways of aromatic amino acid biosynthesis. This reaction introduces a second double bond into the aromatic ring system. The polypeptide is Chorismate synthase (Lactococcus lactis subsp. cremoris (strain MG1363)).